Consider the following 424-residue polypeptide: Protein arginine N-methyltransferase 2 (424 aa).

Disordered stretches follow at residues 67-89 (DEAQ…EQKS) and 151-212 (YEPL…SSRY). The segment covering 71–89 (TETNGVNGETSSASTEQKS) has biased composition (polar residues). Low complexity-rich tracts occupy residues 163–173 (TGQGEDAANEP) and 187–201 (ETTA…ASTE). Residues 205-424 (PDVTSSRYLD…YRLPLCKFMD (220 aa)) form the RMT2 domain. Residues tyrosine 212, methionine 241, 261–266 (HGMGIV), 282–284 (EAH), 309–310 (WQ), and aspartate 329 each bind S-adenosyl-L-methionine.

The protein belongs to the class I-like SAM-binding methyltransferase superfamily. RMT2 methyltransferase family. In terms of assembly, monomer.

It is found in the cytoplasm. It localises to the nucleus. Its function is as follows. S-adenosyl-L-methionine-dependent protein-arginine N-methyltransferase that methylates the delta-nitrogen atom of arginine residues to form N5-methylarginine (type IV) in target proteins. Monomethylates ribosomal protein L12. This chain is Protein arginine N-methyltransferase 2, found in Aspergillus fumigatus (strain ATCC MYA-4609 / CBS 101355 / FGSC A1100 / Af293) (Neosartorya fumigata).